A 205-amino-acid polypeptide reads, in one-letter code: Large ribosomal subunit protein uL4 (205 aa).

Residues 56-76 (VSGTTAKPYRQKHTGRARQGS) form a disordered region.

It belongs to the universal ribosomal protein uL4 family. Part of the 50S ribosomal subunit.

One of the primary rRNA binding proteins, this protein initially binds near the 5'-end of the 23S rRNA. It is important during the early stages of 50S assembly. It makes multiple contacts with different domains of the 23S rRNA in the assembled 50S subunit and ribosome. In terms of biological role, forms part of the polypeptide exit tunnel. The chain is Large ribosomal subunit protein uL4 from Ehrlichia ruminantium (strain Welgevonden).